The following is a 208-amino-acid chain: CASP-like protein 2A1 (208 aa).

At 1–36 (MSKMAEQKAAAVDGLGGAGAADAAPAGEAAAARVRP) the chain is on the cytoplasmic side. Residues 37-57 (VETLLRAAPLGLCVAAMTVML) traverse the membrane as a helical segment. The Extracellular segment spans residues 58–78 (RDQQSNEYGTVAYSDLGGFKY). Residues 79–99 (LVYANGLCAAYSLVSAFYTAV) traverse the membrane as a helical segment. Residues 100-108 (PRPATVSRS) lie on the Cytoplasmic side of the membrane. A helical membrane pass occupies residues 109–129 (WVVFLLDQVFTYLILAAGAAA). Residues 130–161 (AELLYLAYNGDKEVTWSEACGVFGSFCRQART) lie on the Extracellular side of the membrane. Residues 162–182 (SVAITFGTVLCFILLSLISSY) traverse the membrane as a helical segment. At 183–208 (RLFSAYEAPPSSALGSKGVEIAAYPR) the chain is on the cytoplasmic side.

The protein belongs to the Casparian strip membrane proteins (CASP) family. As to quaternary structure, homodimer and heterodimers.

The protein resides in the cell membrane. The sequence is that of CASP-like protein 2A1 from Sorghum bicolor (Sorghum).